A 118-amino-acid chain; its full sequence is Phosphoribosyl-AMP cyclohydrolase (118 aa).

A Mg(2+)-binding site is contributed by Asp-87. Residue Cys-88 coordinates Zn(2+). Residues Asp-89 and Asp-91 each coordinate Mg(2+). Residues Cys-104 and Cys-111 each contribute to the Zn(2+) site.

This sequence belongs to the PRA-CH family. Homodimer. It depends on Mg(2+) as a cofactor. Zn(2+) is required as a cofactor.

Its subcellular location is the cytoplasm. The enzyme catalyses 1-(5-phospho-beta-D-ribosyl)-5'-AMP + H2O = 1-(5-phospho-beta-D-ribosyl)-5-[(5-phospho-beta-D-ribosylamino)methylideneamino]imidazole-4-carboxamide. Its pathway is amino-acid biosynthesis; L-histidine biosynthesis; L-histidine from 5-phospho-alpha-D-ribose 1-diphosphate: step 3/9. In terms of biological role, catalyzes the hydrolysis of the adenine ring of phosphoribosyl-AMP. This Corynebacterium glutamicum (strain R) protein is Phosphoribosyl-AMP cyclohydrolase.